Consider the following 973-residue polypeptide: E3 ubiquitin-protein ligase BRE1A (973 aa).

Residues 1 to 37 are disordered; it reads MSGIGNKRAAGEPGTSMPPEKKTAVEDSGTTVETIKL. The residue at position 21 (Lys21) is an N6-acetyllysine. Ser41 carries the post-translational modification Phosphoserine. A coiled-coil region spans residues 43–90; that stretch reads TEELDIRTLQSKNRKLAEMLDQRQAIEDELREHIEKLERRQATDDASL. The disordered stretch occupies residues 128 to 153; sequence VVPEPEPDSDSNQERKDDRERGDGQE. Phosphoserine occurs at positions 136 and 138. Basic and acidic residues predominate over residues 139–151; it reads NQERKDDRERGDG. Coiled-coil stretches lie at residues 168-378 and 429-896; these read EEME…VKET and SLHK…TTKK. Residues Lys348 and Lys510 each carry the N6-acetyllysine modification. The segment at 507 to 620 is disordered; that stretch reads DLNKTRLRSG…GKHDDGRKKE (114 aa). Ser522 carries the phosphoserine modification. 2 stretches are compositionally biased toward basic and acidic residues: residues 527-544 and 553-620; these read EDPK…EDLA and SQED…RKKE. Ser560 is modified (phosphoserine). Residues 920-959 form an RING-type zinc finger; sequence CPCCNMRKKDAVLTKCFHVFCFECVKTRYDTRQRKCPKCN.

It belongs to the BRE1 family. In terms of assembly, component of the RNF20/40 complex (also known as BRE1 complex) probably composed of 2 copies of RNF20/BRE1A and 2 copies of RNF40/BRE1B. Interacts with UBE2E1/UBCH6. Interacts with p53/TP53 and WAC. Interacts with PAF1; the interaction mediates the association of the PAF1 and RNF20/40 complexes which is a prerequsite for recruitment of UBE2A/B. Interacts with PA2G4. Interacts with FBXL19.

The protein localises to the nucleus. It carries out the reaction S-ubiquitinyl-[E2 ubiquitin-conjugating enzyme]-L-cysteine + [acceptor protein]-L-lysine = [E2 ubiquitin-conjugating enzyme]-L-cysteine + N(6)-ubiquitinyl-[acceptor protein]-L-lysine.. It participates in protein modification; protein ubiquitination. Its function is as follows. Component of the RNF20/40 E3 ubiquitin-protein ligase complex that mediates monoubiquitination of 'Lys-120' of histone H2B (H2BK120ub1). H2BK120ub1 gives a specific tag for epigenetic transcriptional activation and is also prerequisite for histone H3 'Lys-4' and 'Lys-79' methylation (H3K4me and H3K79me, respectively). It thereby plays a central role in histone code and gene regulation. The RNF20/40 complex forms a H2B ubiquitin ligase complex in cooperation with the E2 enzyme UBE2A or UBE2B; reports about the cooperation with UBE2E1/UBCH are contradictory. Required for transcriptional activation of Hox genes. Recruited to the MDM2 promoter, probably by being recruited by p53/TP53, and thereby acts as a transcriptional coactivator. Mediates the polyubiquitination of PA2G4 leading to its proteasome-mediated degradation. The polypeptide is E3 ubiquitin-protein ligase BRE1A (Rnf20) (Mus musculus (Mouse)).